The sequence spans 69 residues: uncharacterized protein (69 aa).

Residues 5–60 (IREHRKELGLTQEELAERVGVTRQTIIALEKGRYSPSLILAHRIARALGREHIEDI) enclose the HTH cro/C1-type domain. A DNA-binding region (H-T-H motif) is located at residues 16–35 (QEELAERVGVTRQTIIALEK).

This is an uncharacterized protein from Methanothermobacter thermautotrophicus (strain ATCC 29096 / DSM 1053 / JCM 10044 / NBRC 100330 / Delta H) (Methanobacterium thermoautotrophicum).